Consider the following 159-residue polypeptide: MPAKLQLDVLRTLQSSARHGTQTLKNSNFLERFHKDRIVFCLPFFPALFLVPVQKVLQHLCLRFTQVAPYFIIQLFDLPSRHAENLAPLLASCRIQYTNCFSSSSNGQVPSIISLYLRVDLSPFYAKIFQISYRVPMIWLDVFQVFFVFLVISQHSLHS.

Helical transmembrane passes span 38 to 58 (IVFCLPFFPALFLVPVQKVLQ) and 135 to 155 (VPMIWLDVFQVFFVFLVISQH).

This sequence belongs to the UPF0479 family.

The protein localises to the membrane. The chain is Putative UPF0479 protein YDR545C-A from Saccharomyces cerevisiae (strain ATCC 204508 / S288c) (Baker's yeast).